Consider the following 146-residue polypeptide: UPF0735 ACT domain-containing protein CHY_1913 (146 aa).

The ACT domain maps to Thr70–Gln145.

This sequence belongs to the UPF0735 family.

This Carboxydothermus hydrogenoformans (strain ATCC BAA-161 / DSM 6008 / Z-2901) protein is UPF0735 ACT domain-containing protein CHY_1913.